The following is a 341-amino-acid chain: Methionine import ATP-binding protein MetN 2 (341 aa).

The ABC transporter domain maps to Ile-2–Val-241. Position 38-45 (Gly-38–Ser-45) interacts with ATP.

This sequence belongs to the ABC transporter superfamily. Methionine importer (TC 3.A.1.24) family. The complex is composed of two ATP-binding proteins (MetN), two transmembrane proteins (MetI) and a solute-binding protein (MetQ).

Its subcellular location is the cell membrane. The catalysed reaction is L-methionine(out) + ATP + H2O = L-methionine(in) + ADP + phosphate + H(+). It carries out the reaction D-methionine(out) + ATP + H2O = D-methionine(in) + ADP + phosphate + H(+). In terms of biological role, part of the ABC transporter complex MetNIQ involved in methionine import. Responsible for energy coupling to the transport system. This Staphylococcus aureus (strain N315) protein is Methionine import ATP-binding protein MetN 2.